Consider the following 192-residue polypeptide: Probable nicotinate-nucleotide adenylyltransferase (192 aa).

Belongs to the NadD family.

The catalysed reaction is nicotinate beta-D-ribonucleotide + ATP + H(+) = deamido-NAD(+) + diphosphate. It functions in the pathway cofactor biosynthesis; NAD(+) biosynthesis; deamido-NAD(+) from nicotinate D-ribonucleotide: step 1/1. Its function is as follows. Catalyzes the reversible adenylation of nicotinate mononucleotide (NaMN) to nicotinic acid adenine dinucleotide (NaAD). This Cereibacter sphaeroides (strain ATCC 17029 / ATH 2.4.9) (Rhodobacter sphaeroides) protein is Probable nicotinate-nucleotide adenylyltransferase.